A 276-amino-acid chain; its full sequence is Nuclear egress protein 2 (276 aa).

The Perinuclear space portion of the chain corresponds to 1–253 (MAGMGKPYGG…LFRAPRPGPP (253 aa)). Residues 212-225 (HSSGAPGPGVAASG) are compositionally biased toward low complexity. Positions 212 to 237 (HSSGAPGPGVAASGPPAPPGRGPARP) are disordered. A helical membrane pass occupies residues 254–274 (ALLLLAAGLFLGAAIWWAVGA). The Nuclear segment spans residues 275-276 (RL).

This sequence belongs to the herpesviridae NEC2 protein family. In terms of assembly, forms a heterohexameric complex with NEC1. Post-translationally, phosphorylated.

It is found in the host nucleus inner membrane. Functionally, plays an essential role in virion nuclear egress, the first step of virion release from infected cell. Within the host nucleus, NEC1 interacts with the newly formed capsid through the vertexes and directs it to the inner nuclear membrane by associating with NEC2. Induces the budding of the capsid at the inner nuclear membrane as well as its envelopment into the perinuclear space. There, the NEC1/NEC2 complex promotes the fusion of the enveloped capsid with the outer nuclear membrane and the subsequent release of the viral capsid into the cytoplasm where it will reach the secondary budding sites in the host Golgi or trans-Golgi network. The protein is Nuclear egress protein 2 of Homo sapiens (Human).